Here is a 467-residue protein sequence, read N- to C-terminus: Cysteine--tRNA ligase (467 aa).

Zn(2+) is bound at residue Cys28. A 'HIGH' region motif is present at residues 30 to 40 (PTVYNYIHVGN). The Zn(2+) site is built by Cys212, His237, and Glu241. The 'KMSKS' region motif lies at 269-273 (KMSKS). Lys272 contacts ATP.

Belongs to the class-I aminoacyl-tRNA synthetase family. Monomer. Requires Zn(2+) as cofactor.

The protein localises to the cytoplasm. It carries out the reaction tRNA(Cys) + L-cysteine + ATP = L-cysteinyl-tRNA(Cys) + AMP + diphosphate. This chain is Cysteine--tRNA ligase, found in Oenococcus oeni (strain ATCC BAA-331 / PSU-1).